A 247-amino-acid chain; its full sequence is Phosphoribosylaminoimidazole-succinocarboxamide synthase (247 aa).

It belongs to the SAICAR synthetase family.

It catalyses the reaction 5-amino-1-(5-phospho-D-ribosyl)imidazole-4-carboxylate + L-aspartate + ATP = (2S)-2-[5-amino-1-(5-phospho-beta-D-ribosyl)imidazole-4-carboxamido]succinate + ADP + phosphate + 2 H(+). It participates in purine metabolism; IMP biosynthesis via de novo pathway; 5-amino-1-(5-phospho-D-ribosyl)imidazole-4-carboxamide from 5-amino-1-(5-phospho-D-ribosyl)imidazole-4-carboxylate: step 1/2. The polypeptide is Phosphoribosylaminoimidazole-succinocarboxamide synthase (Gloeobacter violaceus (strain ATCC 29082 / PCC 7421)).